We begin with the raw amino-acid sequence, 148 residues long: Snaclec flavocetin-A subunit beta (148 aa).

The signal sequence occupies residues 1–23; it reads MGQFIFVSFGFLVVATSLSGTEA. Disulfide bonds link Cys-27/Cys-38, Cys-55/Cys-144, and Cys-121/Cys-136. The C-type lectin domain maps to 34–145; the sequence is YDEHCYQVFQ…CSSKRYVVCK (112 aa).

This sequence belongs to the snaclec family. Tetramer of heterodimers of alpha and beta subunits (alphabeta)(4); disulfide-linked. As to expression, expressed by the venom gland.

It localises to the secreted. Its function is as follows. Strong platelet aggregation inhibitor. Binds specifically to platelet glycoprotein Ibalpha (GP1BA) with high affinity and inhibits vWF-dependent platelet aggregation. Has also been observed to induce small agglutinates in washed platelets by binding to GPIb. The polypeptide is Snaclec flavocetin-A subunit beta (Protobothrops flavoviridis (Habu)).